Consider the following 249-residue polypeptide: Probable phosphatase VV2_1469 (249 aa).

9 residues coordinate Zn(2+): His-8, His-10, His-16, His-41, Glu-74, His-102, His-132, Asp-194, and His-196.

The protein belongs to the PHP family. Zn(2+) is required as a cofactor.

This is Probable phosphatase VV2_1469 from Vibrio vulnificus (strain CMCP6).